A 307-amino-acid chain; its full sequence is MATH domain and coiled-coil domain-containing protein At3g58380 (307 aa).

An MATH domain is found at 6–132; that stretch reads DKKFVWVIKD…CREITIVIEV (127 aa). Residues 238–290 are a coiled coil; sequence KVDWLEKKLKEVKEKKKNVDNGKARLQQIEEDLQKLNQKRLDLKDILDKEKAN.

This chain is MATH domain and coiled-coil domain-containing protein At3g58380, found in Arabidopsis thaliana (Mouse-ear cress).